The following is a 359-amino-acid chain: Type-1 angiotensin II receptor (359 aa).

The Extracellular segment spans residues 1-25 (MMLNSSTEDGIKRIQDDCPKAGRHN). Residue Asn4 is glycosylated (N-linked (GlcNAc...) asparagine). Residues Gln15 and Asp17 each coordinate angiotensin II. Cystine bridges form between Cys18-Cys274 and Cys101-Cys180. The helical transmembrane segment at 26–55 (YIFVMIPTLYSIIFVVGIFGNSLAVIVIYF) threads the bilayer. Over 56–61 (YMKLKT) the chain is Cytoplasmic. A helical membrane pass occupies residues 62–89 (VASVFLLNLALADLCFLLTLPLWAVYTA). The Extracellular portion of the chain corresponds to 90-98 (MEYRWPFGN). The chain crosses the membrane as a helical span at residues 99–125 (YLCKIASASVSFNLYASVFLLTCLSID). The Cytoplasmic segment spans residues 126–141 (RYLAIVHPMKSRLRRT). A helical membrane pass occupies residues 142 to 165 (MLVAKVTCIIIWLLAGLASLPAII). Over 166–190 (HRNVFFIENTNITVCAFHYESQNST) the chain is Extracellular. Residue Arg167 coordinates angiotensin II. Residue Asn176 is glycosylated (N-linked (GlcNAc...) asparagine). The angiotensin II site is built by Phe182, His183, and Tyr184. A glycan (N-linked (GlcNAc...) asparagine) is linked at Asn188. A helical transmembrane segment spans residues 191-216 (LPIGLGLTKNILGFLFPFLIILTSYT). Position 199 (Lys199) interacts with angiotensin II. Residues 217–239 (LIWKALKKAYEIQKNKPRNDDIF) lie on the Cytoplasmic side of the membrane. A helical membrane pass occupies residues 240-268 (KIIMAIVLFFFFSWVPHQIFTFLDVLIQL). Residues 269-278 (GVIHDCRIAD) are Extracellular-facing. The chain crosses the membrane as a helical span at residues 279–304 (IVDTAMPITICIAYFNNCLNPLFYGF). Over 305–359 (LGKKFKKYFLQLLKYIPPKAKSHSNLSTKMSTLSYRPSDNVSSSSKKPVPCFEVE) the chain is Cytoplasmic. The segment covering 335-350 (STLSYRPSDNVSSSSK) has biased composition (polar residues). A disordered region spans residues 335-359 (STLSYRPSDNVSSSSKKPVPCFEVE). Cys355 carries S-palmitoyl cysteine lipidation.

Belongs to the G-protein coupled receptor 1 family. As to quaternary structure, interacts with MAS1. Interacts with ARRB1. Interacts with FLNA (via filamin repeat 21); increases PKA-mediated phosphorylation of FLNA. C-terminal Ser or Thr residues may be phosphorylated.

The protein localises to the cell membrane. In terms of biological role, receptor for angiotensin II, a vasoconstricting peptide, which acts as a key regulator of blood pressure and sodium retention by the kidney. The activated receptor in turn couples to G-alpha proteins G(q) (GNAQ, GNA11, GNA14 or GNA15) and thus activates phospholipase C and increases the cytosolic Ca(2+) concentrations, which in turn triggers cellular responses such as stimulation of protein kinase C. This is Type-1 angiotensin II receptor (AGTR1) from Oryctolagus cuniculus (Rabbit).